Consider the following 265-residue polypeptide: Aquaporin-5 (265 aa).

Over 1 to 12 the chain is Cytoplasmic; sequence MKKEVCSAAFLK. The helical transmembrane segment at 13–33 threads the bilayer; it reads AVFAEFLATLIFVFFGLGSAL. Topologically, residues 34–39 are extracellular; sequence KWPSAM. A helical membrane pass occupies residues 40–60; sequence PSVLQISLAFGLAIGTMAQAL. The Cytoplasmic segment spans residues 61–65; it reads GPVSG. The discontinuously helical intramembrane region spans 66 to 74; the sequence is GHMNPAITL. The NPA 1 motif lies at 69 to 71; it reads NPA. Residues 75 to 87 lie on the Cytoplasmic side of the membrane; that stretch reads ALLVGNQISLLRA. Residues 88-108 form a helical membrane-spanning segment; sequence VFYLVAQLVGAIAGAAILYGL. The Extracellular segment spans residues 109 to 126; sequence APYNARSNLAVNALNNNT. N-linked (GlcNAc...) asparagine glycans are attached at residues Asn124 and Asn125. Residues 127–147 traverse the membrane as a helical segment; that stretch reads TAGQAVVAEMILTFQLALCVF. Over 148–158 the chain is Cytoplasmic; the sequence is SSTDSRRTSPV. Residues 159-179 traverse the membrane as a helical segment; it reads GSPALSIGLSVTLGHLVGIYF. A topological domain (extracellular) is located at residue Thr180. Positions 181 to 191 form an intramembrane region, discontinuously helical; the sequence is GCSMNPARSFG. Residues 185–187 carry the NPA 2 motif; it reads NPA. The Extracellular portion of the chain corresponds to 192–203; that stretch reads PAVIMSRFSSAH. A helical transmembrane segment spans residues 204-224; that stretch reads WVFWVGPIVGAATAAIIYFYL. The Cytoplasmic segment spans residues 225 to 265; the sequence is LFPHSLSLSDRVAILKGTYEPDEDWEESQEERKKTMELTAH.

This sequence belongs to the MIP/aquaporin (TC 1.A.8) family. Homotetramer; each monomer provides an independent water pore. Interacts with TRPV4; the interaction is probably indirect and regulates TRPV4 activation by hypotonicity.

Its subcellular location is the apical cell membrane. It is found in the cell membrane. The protein localises to the cytoplasmic vesicle membrane. It carries out the reaction H2O(in) = H2O(out). Its function is as follows. Aquaporins form homotetrameric transmembrane channels, with each monomer independently mediating water transport across the plasma membrane along its osmotic gradient. Plays an important role in fluid secretion in salivary glands. Required for TRPV4 activation by hypotonicity. Together with TRPV4, controls regulatory volume decrease in salivary epithelial cells. Seems to play a redundant role in water transport in the eye, lung and in sweat glands. This Ovis aries (Sheep) protein is Aquaporin-5.